The chain runs to 221 residues: Small ribosomal subunit protein eS8 (221 aa).

Disordered stretches follow at residues 1–41 (MGIS…LSSN) and 128–169 (TPAA…TLDP). The segment covering 8 to 26 (MHKRRATGGKQKAWRKKRK) has biased composition (basic residues). Basic and acidic residues predominate over residues 146-169 (EETKKSNHVTRKLEKRKEGRTLDP).

It belongs to the eukaryotic ribosomal protein eS8 family.

This Zea mays (Maize) protein is Small ribosomal subunit protein eS8 (RPS8).